We begin with the raw amino-acid sequence, 475 residues long: Aspartyl/glutamyl-tRNA(Asn/Gln) amidotransferase subunit B (475 aa).

This sequence belongs to the GatB/GatE family. GatB subfamily. As to quaternary structure, heterotrimer of A, B and C subunits.

It catalyses the reaction L-glutamyl-tRNA(Gln) + L-glutamine + ATP + H2O = L-glutaminyl-tRNA(Gln) + L-glutamate + ADP + phosphate + H(+). The enzyme catalyses L-aspartyl-tRNA(Asn) + L-glutamine + ATP + H2O = L-asparaginyl-tRNA(Asn) + L-glutamate + ADP + phosphate + 2 H(+). Its function is as follows. Allows the formation of correctly charged Asn-tRNA(Asn) or Gln-tRNA(Gln) through the transamidation of misacylated Asp-tRNA(Asn) or Glu-tRNA(Gln) in organisms which lack either or both of asparaginyl-tRNA or glutaminyl-tRNA synthetases. The reaction takes place in the presence of glutamine and ATP through an activated phospho-Asp-tRNA(Asn) or phospho-Glu-tRNA(Gln). The sequence is that of Aspartyl/glutamyl-tRNA(Asn/Gln) amidotransferase subunit B from Caldanaerobacter subterraneus subsp. tengcongensis (strain DSM 15242 / JCM 11007 / NBRC 100824 / MB4) (Thermoanaerobacter tengcongensis).